Reading from the N-terminus, the 72-residue chain is Sperm protein associated with the nucleus on the X chromosome N1 (72 aa).

Positions 1–40 (MEKPTSSTNGEKRKSPCDSNSKNDEMQETPNRDLVLEPSL) are disordered. Positions 10 to 35 (GEKRKSPCDSNSKNDEMQETPNRDLV) are enriched in basic and acidic residues.

Belongs to the SPAN-X family.

The polypeptide is Sperm protein associated with the nucleus on the X chromosome N1 (SPANXN1) (Pan troglodytes (Chimpanzee)).